The primary structure comprises 318 residues: uncharacterized protein (318 aa).

The protein to A.aeolicus AA07 and AA34.

This is an uncharacterized protein from Aquifex aeolicus (strain VF5).